The sequence spans 864 residues: N-alpha-acetyltransferase 16, NatA auxiliary subunit (864 aa).

7 TPR repeats span residues 46 to 79 (GETL…DVRS), 80 to 113 (HVCW…DKDN), 148 to 184 (RASW…PPNK), 224 to 257 (LLVE…NAEN), 374 to 407 (IWVQ…TPTL), 408 to 441 (IELF…DTAD), and 485 to 514 (MWFE…VERH). A disordered region spans residues 594-646 (KMLSKQRRAQKKAKVEEERKHTERERQQKNQKKKREEEEEVTSGHKEELIPEK). Basic residues predominate over residues 595 to 605 (MLSKQRRAQKK). 2 stretches are compositionally biased toward basic and acidic residues: residues 606–621 (AKVE…ERQQ) and 635–646 (TSGHKEELIPEK).

In terms of assembly, component of the N-terminal acetyltransferase A (NatA) complex composed of NAA10 and NAA16. Highest levels in the kidney and testes. Moderate expression in the liver, thymus and skin.

Auxillary subunit of the N-terminal acetyltransferase A (NatA) complex which displays alpha (N-terminal) acetyltransferase activity. This is N-alpha-acetyltransferase 16, NatA auxiliary subunit (Naa16) from Mus musculus (Mouse).